We begin with the raw amino-acid sequence, 150 residues long: Protein Turandot X (150 aa).

The signal sequence occupies residues 1–22 (MGLHIGSLLICVFLGILPFATA). The interval 127–150 (REEGQSNHANSPTTLPSRIQKMTK) is disordered. A compositionally biased stretch (polar residues) spans 132–150 (SNHANSPTTLPSRIQKMTK).

This sequence belongs to the Turandot family.

Its subcellular location is the secreted. A humoral factor that may play a role in stress tolerance. The polypeptide is Protein Turandot X (Drosophila simulans (Fruit fly)).